The following is a 1343-amino-acid chain: DNA-directed RNA polymerase subunit beta (1343 aa).

Belongs to the RNA polymerase beta chain family. The RNAP catalytic core consists of 2 alpha, 1 beta, 1 beta' and 1 omega subunit. When a sigma factor is associated with the core the holoenzyme is formed, which can initiate transcription.

The enzyme catalyses RNA(n) + a ribonucleoside 5'-triphosphate = RNA(n+1) + diphosphate. Functionally, DNA-dependent RNA polymerase catalyzes the transcription of DNA into RNA using the four ribonucleoside triphosphates as substrates. In Haemophilus influenzae (strain PittEE), this protein is DNA-directed RNA polymerase subunit beta.